Consider the following 710-residue polypeptide: MTERLLRYFRDKQQDVQSEKTYDTQCPFCSMQCKMQLVEQTIVTRKKYTAIGIDNPTTQGRLCIKGMNAHQHALNSSRITRPLLKKNGEFMPVSWEEALNHIKDQVTMIQTEHGHDAMAVYGSASITNEEAYLLGKFARVGLQTKYIDYNGRLCMSAAATAANQTFGADRGLTNPLSDIPHTRVIILAGTNIAECQPTIMPYFEKAKENGAYFIAIDPRETATTKIADLHLKIKPGTDAALANGLVKIIIDEQLINEDFIQSRTNGFEELKQHTDSLDLNDIAEQTSVSLVDIRKAAVKFAKETSGMLFTARGIEQQTDGTAAVKGFLNMVLITGKIGKPYSGYGAITGQGNGQGAREHGQKADQLPGYRSIENEEHRAHIAKVWGIHQDELPRKGVSAYEMMEKINDGDIKGLFLMCSNPAVSSPNANLVKKALRRLTFFVAIDLFISETAKYADVILPASSYLEDEGTMTNVEGRVTLREASRPCPGEAKHDWQIICDLASALGKGRYFSYTSAEDIFNELREASRGGIADYSGISYGRLRREGGIHWPCPESDHPGTGRLFTESFAHPDQKAALSVIPNEPPVPKEKPTADYPLYLTTGRVMSHYLTGVQTRKSAALAARHFESFMEIHPQTAATYNIEDRVLVKIESPRGSITVRSKLSEQIRKDTVFVPIHWADAQNVNDLIGEALDPACKMPGFKVCAVRIIPI.

Residues 19-77 (EKTYDTQCPFCSMQCKMQLVEQTIVTRKKYTAIGIDNPTTQGRLCIKGMNAHQHALNSS) form the 4Fe-4S Mo/W bis-MGD-type domain. [4Fe-4S] cluster contacts are provided by Cys-26, Cys-29, Cys-33, and Cys-63.

This sequence belongs to the prokaryotic molybdopterin-containing oxidoreductase family. [4Fe-4S] cluster serves as cofactor. The cofactor is Mo-bis(molybdopterin guanine dinucleotide).

It participates in nitrogen metabolism; nitrate reduction (denitrification); dinitrogen from nitrate: step 1/4. Functionally, nitrate reductase is a key enzyme involved in the first step of nitrate assimilation in plants, fungi and bacteria. The protein is Assimilatory nitrate reductase catalytic subunit (nasC) of Bacillus subtilis (strain 168).